The sequence spans 105 residues: Heat shock protein HspQ (105 aa).

Belongs to the HspQ family.

The protein localises to the cytoplasm. In terms of biological role, involved in the degradation of certain denaturated proteins, including DnaA, during heat shock stress. The sequence is that of Heat shock protein HspQ from Klebsiella pneumoniae (strain 342).